We begin with the raw amino-acid sequence, 545 residues long: Chaperonin GroEL (545 aa).

ATP-binding positions include 29-32, 86-90, Gly413, 476-478, and Asp492; these read TLGP, DGTTT, and NAA.

This sequence belongs to the chaperonin (HSP60) family. As to quaternary structure, forms a cylinder of 14 subunits composed of two heptameric rings stacked back-to-back. Interacts with the co-chaperonin GroES.

The protein localises to the cytoplasm. The catalysed reaction is ATP + H2O + a folded polypeptide = ADP + phosphate + an unfolded polypeptide.. Functionally, together with its co-chaperonin GroES, plays an essential role in assisting protein folding. The GroEL-GroES system forms a nano-cage that allows encapsulation of the non-native substrate proteins and provides a physical environment optimized to promote and accelerate protein folding. In Oceanobacillus iheyensis (strain DSM 14371 / CIP 107618 / JCM 11309 / KCTC 3954 / HTE831), this protein is Chaperonin GroEL.